Here is a 456-residue protein sequence, read N- to C-terminus: Phosphomethylpyrimidine synthase (456 aa).

Substrate is bound by residues asparagine 80, methionine 109, tyrosine 139, histidine 175, 195–197 (SRG), 236–239 (DSLR), and glutamate 275. Residue histidine 279 participates in Zn(2+) binding. Residue tyrosine 302 coordinates substrate. Histidine 343 serves as a coordination point for Zn(2+). Positions 423, 426, and 431 each coordinate [4Fe-4S] cluster.

The protein belongs to the ThiC family. [4Fe-4S] cluster serves as cofactor.

The catalysed reaction is 5-amino-1-(5-phospho-beta-D-ribosyl)imidazole + S-adenosyl-L-methionine = 4-amino-2-methyl-5-(phosphooxymethyl)pyrimidine + CO + 5'-deoxyadenosine + formate + L-methionine + 3 H(+). The protein operates within cofactor biosynthesis; thiamine diphosphate biosynthesis. In terms of biological role, catalyzes the synthesis of the hydroxymethylpyrimidine phosphate (HMP-P) moiety of thiamine from aminoimidazole ribotide (AIR) in a radical S-adenosyl-L-methionine (SAM)-dependent reaction. The chain is Phosphomethylpyrimidine synthase from Synechococcus elongatus (strain ATCC 33912 / PCC 7942 / FACHB-805) (Anacystis nidulans R2).